Here is a 1816-residue protein sequence, read N- to C-terminus: Kinesin-like protein KIF1B (1816 aa).

Serine 2 bears the N-acetylserine mark. The Kinesin motor domain maps to serine 5–isoleucine 354. Glycine 97–serine 104 provides a ligand contact to ATP. An interaction with KIFBP region spans residues asparagine 270–arginine 350. Residues phenylalanine 431 to serine 450 are disordered. A compositionally biased stretch (low complexity) spans serine 432–serine 450. Residues glycine 470–methionine 512 adopt a coiled-coil conformation. The FHA domain occupies threonine 556–valine 612. Phosphothreonine is present on residues threonine 647 and threonine 652. Positions isoleucine 672–glutamate 731 form a coiled coil. Phosphoserine occurs at positions 1054, 1057, 1416, 1454, and 1487. The disordered stretch occupies residues serine 1550 to aspartate 1570. Phosphoserine is present on residues serine 1573, serine 1603, serine 1610, and serine 1613. Positions serine 1620–serine 1637 are enriched in low complexity. Residues serine 1620–serine 1659 form a disordered region. Positions aspartate 1640–serine 1659 are enriched in polar residues. The region spanning valine 1701–alanine 1799 is the PH domain.

It belongs to the TRAFAC class myosin-kinesin ATPase superfamily. Kinesin family. Unc-104 subfamily. As to quaternary structure, monomer. Interacts with KIFBP; positively regulates KIF1B microtubule motor activity. Interacts (via C-terminus end of the kinesin-motor domain) with CHP1; the interaction occurs in a calcium-dependent manner. Interacts with MADD (via death domain); links this isoform of KIF1B to Rab3-carrying vesicles in anterograde synaptic vesicle transport. As to expression, expressed in the brain with lower expression in testis and liver (at protein level). Strongly expressed in the brain and ovary, with lower expression in lung, kidney, uterus, testis and liver. Isoform 2 is expressed in non-neuronal tissues.

It is found in the cytoplasm. The protein localises to the cytoskeleton. Its subcellular location is the cytoplasmic vesicle. The protein resides in the secretory vesicle. It localises to the synaptic vesicle membrane. It is found in the lysosome. It catalyses the reaction ATP + H2O + a kinesin associated with a microtubule at position (n) = ADP + phosphate a kinesin associated with a microtubule at position (n+1, toward the plus end).. Functionally, has a plus-end-directed microtubule motor activity and functions as a motor for transport of vesicles and organelles along microtubules. In terms of biological role, has a plus-end-directed microtubule motor activity and functions as a motor for anterograde synaptic vesicle transport along axonal microtubules from the cell body to the presynapse in neuronal cells. Its function is as follows. Has a plus-end-directed microtubule motor activity and functions as a motor for the translocation of lysosomes from perinuclear regions to the cell periphery. This chain is Kinesin-like protein KIF1B, found in Rattus norvegicus (Rat).